The following is a 402-amino-acid chain: Endo-polygalacturonase (402 aa).

The N-terminal stretch at 1–23 (MEYQSGKRVLSLSLGLIGLFSAS) is a signal peptide. Cystine bridges form between C41–C62 and C115–C125. Residue D249 is the Proton donor of the active site. Residue H277 is part of the active site.

It belongs to the glycosyl hydrolase 28 family. As to quaternary structure, monomer.

The protein localises to the secreted. It catalyses the reaction (1,4-alpha-D-galacturonosyl)n+m + H2O = (1,4-alpha-D-galacturonosyl)n + (1,4-alpha-D-galacturonosyl)m.. In terms of biological role, involved in maceration and soft-rotting of plant tissue. The polypeptide is Endo-polygalacturonase (pehA) (Pectobacterium parmentieri).